The following is a 468-amino-acid chain: MTSQLHKKGEAWSARFSEPMSELVKRYTSSVFFDKRLALVDIEGSLAHASMLAAQKIIAADDLTAIQRGMAQIKGEIERGEFEWQLDLEDVHLNIEARLTALIGDAGKRLHTGRSRNDQVATDIRLWLRGEIDRIGGLLTELRTALLDMAEKNAATIMPGFTHLQVAQPVTFGHHLLAYVEMFSRDAERMIDCRKRVNRLPLGAAALAGTSYPIDRYAVAKTLGFDGICANSLDAVSDRDFAIEFTAASALVMTHISRFSEELVLWMSPRVGFIDLADRFCTGSSIMPQKKNPDVPELARGKTGRVNGHLIALLTLMKGQPLAYNKDNQEDKEPLFDTVDTVADTLRIFAEMVAGISVKPQAMRDAALQGFSTATDLADYLVKRGLPFRDAHEAVALAVRVCADRGCDLADLTLEEMRKELSNVAHLIGEDVFSYLTLEGSVASRNHPGGTAPEQVLAAVKAAREALK.

It belongs to the lyase 1 family. Argininosuccinate lyase subfamily.

The protein resides in the cytoplasm. It catalyses the reaction 2-(N(omega)-L-arginino)succinate = fumarate + L-arginine. Its pathway is amino-acid biosynthesis; L-arginine biosynthesis; L-arginine from L-ornithine and carbamoyl phosphate: step 3/3. The chain is Argininosuccinate lyase from Paraburkholderia xenovorans (strain LB400).